The sequence spans 589 residues: Isocitrate dehydrogenase kinase/phosphatase (589 aa).

ATP is bound by residues 322–328 (APGIRGL) and K343. The active site involves D378.

It belongs to the AceK family.

It is found in the cytoplasm. The catalysed reaction is L-seryl-[isocitrate dehydrogenase] + ATP = O-phospho-L-seryl-[isocitrate dehydrogenase] + ADP + H(+). In terms of biological role, bifunctional enzyme which can phosphorylate or dephosphorylate isocitrate dehydrogenase (IDH) on a specific serine residue. This is a regulatory mechanism which enables bacteria to bypass the Krebs cycle via the glyoxylate shunt in response to the source of carbon. When bacteria are grown on glucose, IDH is fully active and unphosphorylated, but when grown on acetate or ethanol, the activity of IDH declines drastically concomitant with its phosphorylation. The sequence is that of Isocitrate dehydrogenase kinase/phosphatase from Azoarcus sp. (strain BH72).